A 291-amino-acid polypeptide reads, in one-letter code: Polyamine aminopropyltransferase (291 aa).

A PABS domain is found at 5 to 245; sequence PGPIVLMEPL…YAVNFVLGSL (241 aa). Glutamine 36 is a binding site for S-methyl-5'-thioadenosine. Residues histidine 67 and glutamate 91 each contribute to the spermidine site. Residues aspartate 111 and 143–144 each bind S-methyl-5'-thioadenosine; that span reads DG. Aspartate 164 serves as the catalytic Proton acceptor.

The protein belongs to the spermidine/spermine synthase family. As to quaternary structure, homodimer or homotetramer.

It is found in the cytoplasm. The enzyme catalyses norspermidine + S-adenosyl 3-(methylsulfanyl)propylamine = norspermine + S-methyl-5'-thioadenosine + H(+). The catalysed reaction is S-adenosyl 3-(methylsulfanyl)propylamine + spermidine = thermospermine + S-methyl-5'-thioadenosine + H(+). In terms of biological role, involved in the biosynthesis of polyamines which are thought to support the growth of thermophilic microorganisms under high-temperature conditions. It seems that long-chain and branched-chain of polyamines effectively stabilize DNA and RNA, respectively. Catalyzes the irreversible transfer of a propylamine group from the amino donor S-adenosylmethioninamine (decarboxy-AdoMet) to norspermidine and 1,3-diaminopropane to yield norspermine, and to spermidine to yield thermospermine. It can also synthesize thermospermine from putrescine (1,4-diaminobutane) and caldopentamine from norspermine with a very low activity. The biosynthesis of caldohexamine and caldoheptamine from caldopentamine has been also observed. This is Polyamine aminopropyltransferase from Pyrobaculum aerophilum (strain ATCC 51768 / DSM 7523 / JCM 9630 / CIP 104966 / NBRC 100827 / IM2).